Reading from the N-terminus, the 160-residue chain is Cytochrome b6-f complex subunit 4 (160 aa).

3 consecutive transmembrane segments (helical) span residues 36-56 (LLYL…GLAV), 95-115 (LLGV…PFIE), and 131-151 (LVFI…CLPI).

The protein belongs to the cytochrome b family. PetD subfamily. In terms of assembly, the 4 large subunits of the cytochrome b6-f complex are cytochrome b6, subunit IV (17 kDa polypeptide, petD), cytochrome f and the Rieske protein, while the 4 small subunits are petG, petL, petM and petN. The complex functions as a dimer.

It localises to the plastid. The protein resides in the chloroplast thylakoid membrane. Functionally, component of the cytochrome b6-f complex, which mediates electron transfer between photosystem II (PSII) and photosystem I (PSI), cyclic electron flow around PSI, and state transitions. This is Cytochrome b6-f complex subunit 4 from Thalassiosira pseudonana (Marine diatom).